The primary structure comprises 352 residues: WAT1-related protein At1g11450 (352 aa).

10 helical membrane-spanning segments follow: residues 14–34 (WPPM…NALV), 46–66 (IIGA…AYFL), 83–103 (FISG…GLSY), 107–127 (TVAC…ALIL), 139–159 (AGMI…FLTF), 187–207 (WLLG…WILF), 219–239 (FSST…LSLY), 253–273 (FVIG…TVAA), 283–303 (VFAS…DFLI), and 308–328 (LYLG…VFLW). EamA domains follow at residues 27–157 (MGSV…ALFL) and 192–335 (LYLV…KETE).

Belongs to the drug/metabolite transporter (DMT) superfamily. Plant drug/metabolite exporter (P-DME) (TC 2.A.7.4) family.

The protein localises to the membrane. This chain is WAT1-related protein At1g11450, found in Arabidopsis thaliana (Mouse-ear cress).